Consider the following 225-residue polypeptide: Heptaprenylglyceryl phosphate synthase (225 aa).

Residue lysine 6 coordinates sn-glycerol 1-phosphate. Mg(2+) is bound by residues aspartate 8 and threonine 34. Residues 153–158 (YVEYSG), glycine 183, and 203–204 (GN) each bind sn-glycerol 1-phosphate.

It belongs to the GGGP/HepGP synthase family. Group I subfamily. Homodimer. Mg(2+) serves as cofactor.

The enzyme catalyses sn-glycerol 1-phosphate + all-trans-heptaprenyl diphosphate = 3-heptaprenyl-sn-glycero-1-phosphate + diphosphate. Its pathway is membrane lipid metabolism; glycerophospholipid metabolism. Functionally, prenyltransferase that catalyzes in vivo the transfer of the heptaprenyl moiety of heptaprenyl pyrophosphate (HepPP; 35 carbon atoms) to the C3 hydroxyl of sn-glycerol-1-phosphate (G1P), producing heptaprenylglyceryl phosphate (HepGP). This reaction is an ether-bond-formation step in the biosynthesis of archaea-type G1P-based membrane lipids found in Bacillales. To a much lesser extent, is also able to use geranylgeranyl diphosphate (GGPP; C20) as the prenyl donor. This Listeria monocytogenes serovar 1/2a (strain ATCC BAA-679 / EGD-e) protein is Heptaprenylglyceryl phosphate synthase.